Here is a 379-residue protein sequence, read N- to C-terminus: Succinyl-diaminopimelate desuccinylase (379 aa).

A Zn(2+)-binding site is contributed by histidine 70. Residue aspartate 72 is part of the active site. Aspartate 103 lines the Zn(2+) pocket. The active-site Proton acceptor is glutamate 137. The Zn(2+) site is built by glutamate 138, glutamate 166, and histidine 352.

It belongs to the peptidase M20A family. DapE subfamily. In terms of assembly, homodimer. Requires Zn(2+) as cofactor. The cofactor is Co(2+).

It catalyses the reaction N-succinyl-(2S,6S)-2,6-diaminopimelate + H2O = (2S,6S)-2,6-diaminopimelate + succinate. It participates in amino-acid biosynthesis; L-lysine biosynthesis via DAP pathway; LL-2,6-diaminopimelate from (S)-tetrahydrodipicolinate (succinylase route): step 3/3. Functionally, catalyzes the hydrolysis of N-succinyl-L,L-diaminopimelic acid (SDAP), forming succinate and LL-2,6-diaminopimelate (DAP), an intermediate involved in the bacterial biosynthesis of lysine and meso-diaminopimelic acid, an essential component of bacterial cell walls. The protein is Succinyl-diaminopimelate desuccinylase of Burkholderia ambifaria (strain ATCC BAA-244 / DSM 16087 / CCUG 44356 / LMG 19182 / AMMD) (Burkholderia cepacia (strain AMMD)).